The sequence spans 834 residues: Structure-specific endonuclease subunit SLX4 (834 aa).

Disordered stretches follow at residues R80–T105, T272–K307, Q332–V372, G401–A421, E603–L649, and A720–P740. The span at P279–Q295 shows a compositional bias: polar residues. The segment covering Q296–K305 has biased composition (basic residues). Composition is skewed to polar residues over residues S345 to N366 and D412 to A421. Residues D611–P630 show a composition bias toward basic and acidic residues. Low complexity predominate over residues Q729 to P740.

It belongs to the SLX4 family. In terms of assembly, forms a heterodimer with SLX1. In terms of processing, phosphorylated in response to DNA damage.

It is found in the nucleus. Functionally, regulatory subunit of the SLX1-SLX4 structure-specific endonuclease that resolves DNA secondary structures generated during DNA repair and recombination. Has endonuclease activity towards branched DNA substrates, introducing single-strand cuts in duplex DNA close to junctions with ss-DNA. The sequence is that of Structure-specific endonuclease subunit SLX4 from Ajellomyces capsulatus (strain NAm1 / WU24) (Darling's disease fungus).